Reading from the N-terminus, the 605-residue chain is Isocitrate dehydrogenase kinase/phosphatase (605 aa).

ATP-binding positions include 327 to 333 and lysine 348; that span reads APGIKGL. Aspartate 383 is an active-site residue.

The protein belongs to the AceK family.

Its subcellular location is the cytoplasm. The catalysed reaction is L-seryl-[isocitrate dehydrogenase] + ATP = O-phospho-L-seryl-[isocitrate dehydrogenase] + ADP + H(+). Functionally, bifunctional enzyme which can phosphorylate or dephosphorylate isocitrate dehydrogenase (IDH) on a specific serine residue. This is a regulatory mechanism which enables bacteria to bypass the Krebs cycle via the glyoxylate shunt in response to the source of carbon. When bacteria are grown on glucose, IDH is fully active and unphosphorylated, but when grown on acetate or ethanol, the activity of IDH declines drastically concomitant with its phosphorylation. In Burkholderia lata (strain ATCC 17760 / DSM 23089 / LMG 22485 / NCIMB 9086 / R18194 / 383), this protein is Isocitrate dehydrogenase kinase/phosphatase.